The chain runs to 262 residues: Nitrate transport protein NasD (262 aa).

The ABC transporter domain occupies 5–239 (IQVQGVSQRF…RPRNRVQLAD (235 aa)). 41-48 (GHSGCGKS) lines the ATP pocket.

This sequence belongs to the ABC transporter superfamily.

It localises to the cell membrane. Functionally, probably part of a high-affinity binding-protein-dependent transport system for nitrate. Probably responsible for energy coupling to the transport system. The protein is Nitrate transport protein NasD (nasD) of Klebsiella oxytoca.